A 227-amino-acid polypeptide reads, in one-letter code: Cytochrome c oxidase subunit 2 (227 aa).

The Mitochondrial intermembrane portion of the chain corresponds to 1-14 (MAYPHQLGFQDATS). A helical transmembrane segment spans residues 15–45 (PIMEELLSFHDHTLMIVFLISSLVLYLISLM). Over 46–59 (LTTKLTHTSTMDAQ) the chain is Mitochondrial matrix. A helical membrane pass occupies residues 60 to 87 (EVETVWTILPAIILIMIALPSLRILYMM). Over 88–227 (DEINNPLLTV…SFENWTTSMT (140 aa)) the chain is Mitochondrial intermembrane. Positions 161, 196, 198, 200, 204, and 207 each coordinate Cu cation. Mg(2+) is bound at residue E198.

Belongs to the cytochrome c oxidase subunit 2 family. As to quaternary structure, component of the cytochrome c oxidase (complex IV, CIV), a multisubunit enzyme composed of 14 subunits. The complex is composed of a catalytic core of 3 subunits MT-CO1, MT-CO2 and MT-CO3, encoded in the mitochondrial DNA, and 11 supernumerary subunits COX4I, COX5A, COX5B, COX6A, COX6B, COX6C, COX7A, COX7B, COX7C, COX8 and NDUFA4, which are encoded in the nuclear genome. The complex exists as a monomer or a dimer and forms supercomplexes (SCs) in the inner mitochondrial membrane with NADH-ubiquinone oxidoreductase (complex I, CI) and ubiquinol-cytochrome c oxidoreductase (cytochrome b-c1 complex, complex III, CIII), resulting in different assemblies (supercomplex SCI(1)III(2)IV(1) and megacomplex MCI(2)III(2)IV(2)). Found in a complex with TMEM177, COA6, COX18, COX20, SCO1 and SCO2. Interacts with TMEM177 in a COX20-dependent manner. Interacts with COX20. Interacts with COX16. Cu cation is required as a cofactor.

The protein resides in the mitochondrion inner membrane. It catalyses the reaction 4 Fe(II)-[cytochrome c] + O2 + 8 H(+)(in) = 4 Fe(III)-[cytochrome c] + 2 H2O + 4 H(+)(out). Component of the cytochrome c oxidase, the last enzyme in the mitochondrial electron transport chain which drives oxidative phosphorylation. The respiratory chain contains 3 multisubunit complexes succinate dehydrogenase (complex II, CII), ubiquinol-cytochrome c oxidoreductase (cytochrome b-c1 complex, complex III, CIII) and cytochrome c oxidase (complex IV, CIV), that cooperate to transfer electrons derived from NADH and succinate to molecular oxygen, creating an electrochemical gradient over the inner membrane that drives transmembrane transport and the ATP synthase. Cytochrome c oxidase is the component of the respiratory chain that catalyzes the reduction of oxygen to water. Electrons originating from reduced cytochrome c in the intermembrane space (IMS) are transferred via the dinuclear copper A center (CU(A)) of subunit 2 and heme A of subunit 1 to the active site in subunit 1, a binuclear center (BNC) formed by heme A3 and copper B (CU(B)). The BNC reduces molecular oxygen to 2 water molecules using 4 electrons from cytochrome c in the IMS and 4 protons from the mitochondrial matrix. This Georychus capensis (Cape mole rat) protein is Cytochrome c oxidase subunit 2 (MT-CO2).